The primary structure comprises 475 residues: Lipoprotein lipase (475 aa).

The N-terminal stretch at 1–27 is a signal peptide; that stretch reads MESKALLLVALGMWFQSLTATRGGVAA. The segment at 32-53 is interaction with GPIHBP1; sequence GDFIDIESKFALRTPEDTAEDT. Residues C54 and C67 are joined by a disulfide bond. The N-linked (GlcNAc...) asparagine glycan is linked to N70. The residue at position 121 (Y121) is a 3'-nitrotyrosine. The active-site Nucleophile is S159. D183 acts as the Charge relay system in catalysis. At Y191 the chain carries 3'-nitrotyrosine. 4 residues coordinate Ca(2+): A194, R197, S199, and D202. Cysteines 243 and 266 form a disulfide. The active-site Charge relay system is H268. 2 cysteine pairs are disulfide-bonded: C291/C310 and C302/C305. The region spanning 341 to 464 is the PLAT domain; that stretch reads FHYQVKIHFS…KGKASVVFVK (124 aa). Residue Y343 is modified to 3'-nitrotyrosine. An N-linked (GlcNAc...) asparagine glycan is attached at N386. The tract at residues 417–421 is important for interaction with lipoprotein particles; it reads WSDWW. The segment at 430–434 is important for heparin binding; that stretch reads KIRVK. Positions 443 to 467 are interaction with GPIHBP1; that stretch reads IFCSREKVSHLQKGKASVVFVKCHD. C445 and C465 are oxidised to a cystine.

It belongs to the AB hydrolase superfamily. Lipase family. In terms of assembly, homodimer. Interacts with GPIHBP1 with 1:1 stoichiometry. Interacts with APOC2; the interaction activates LPL activity in the presence of lipids. Interaction with heparan sulfate proteoglycans is required to protect LPL against loss of activity. Associates with lipoprotein particles in blood plasma. Interacts with LMF1 and SEL1L; interaction with SEL1L is required to prevent aggregation of newly synthesized LPL in the endoplasmic reticulum (ER), and for normal export of LPL from the ER to the extracellular space. Interacts with SORL1; SORL1 acts as a sorting receptor, promoting LPL localization to endosomes and later to lysosomes, leading to degradation of newly synthesized LPL. Post-translationally, tyrosine nitration after lipopolysaccharide (LPS) challenge down-regulates the lipase activity.

The protein resides in the cell membrane. It is found in the secreted. The protein localises to the extracellular space. Its subcellular location is the extracellular matrix. The enzyme catalyses a triacylglycerol + H2O = a diacylglycerol + a fatty acid + H(+). The apolipoprotein APOC2 acts as a coactivator of LPL activity. Ca(2+) binding promotes protein stability and formation of the active homodimer. Interaction with GPIHBP1 protects LPL against inactivation by ANGPTL4. Its function is as follows. Key enzyme in triglyceride metabolism. Catalyzes the hydrolysis of triglycerides from circulating chylomicrons and very low density lipoproteins (VLDL), and thereby plays an important role in lipid clearance from the blood stream, lipid utilization and storage. Mediates margination of triglyceride-rich lipoprotein particles in capillaries. Recruited to its site of action on the luminal surface of vascular endothelium by binding to GPIHBP1 and cell surface heparan sulfate proteoglycans. This Neovison vison (American mink) protein is Lipoprotein lipase (LPL).